The chain runs to 561 residues: PR domain zinc finger protein 14 (561 aa).

Positions M1 to Q20 are disordered. Polar residues predominate over residues G7 to Q20. The tract at residues G184–E373 is interaction with CBFA2T2. The region spanning E241 to G356 is the SET domain. Y355 provides a ligand contact to S-adenosyl-L-methionine. Residues Y390–D416 form a C2H2-type 1; atypical zinc finger. 5 consecutive C2H2-type zinc fingers follow at residues F422–H445, Y451–H473, Y479–H501, F507–H530, and S536–H558.

It belongs to the class V-like SAM-binding methyltransferase superfamily. In terms of assembly, interacts with CBFA2T2. Restricted to embryonic stem cells and primordial germ cells. Not detected in epiblast-derived stem cells.

The protein resides in the nucleus. In terms of biological role, transcription factor that has both positive and negative roles on transcription. Plays a role in cellular pluripotency. Essential for germ cell development at 2 levels: the reacquisition of potential pluripotency, including SOX2 up-regulation, and successful epigenetic reprogramming, characterized by EHMT1 repression. Its association with CBFA2T2 is required for the functions in pluripotency and germ cell formation. This Mus musculus (Mouse) protein is PR domain zinc finger protein 14 (Prdm14).